The primary structure comprises 422 residues: Glutamyl-tRNA reductase (422 aa).

Residues 49–52 (TCNR), S107, 112–114 (EPQ), and Q118 contribute to the substrate site. The active-site Nucleophile is C50. Position 187–192 (187–192 (GAGETI)) interacts with NADP(+).

Belongs to the glutamyl-tRNA reductase family. As to quaternary structure, homodimer.

It carries out the reaction (S)-4-amino-5-oxopentanoate + tRNA(Glu) + NADP(+) = L-glutamyl-tRNA(Glu) + NADPH + H(+). It functions in the pathway porphyrin-containing compound metabolism; protoporphyrin-IX biosynthesis; 5-aminolevulinate from L-glutamyl-tRNA(Glu): step 1/2. In terms of biological role, catalyzes the NADPH-dependent reduction of glutamyl-tRNA(Glu) to glutamate 1-semialdehyde (GSA). This is Glutamyl-tRNA reductase from Pseudomonas aeruginosa (strain ATCC 15692 / DSM 22644 / CIP 104116 / JCM 14847 / LMG 12228 / 1C / PRS 101 / PAO1).